The following is a 384-amino-acid chain: Queuine tRNA-ribosyltransferase (384 aa).

Residue D103 is the Proton acceptor of the active site. Substrate contacts are provided by residues 103–107 (DSGGF), D157, Q200, and G227. Residues 258–264 (GVGTYRE) form an RNA binding region. The active-site Nucleophile is the D277. Positions 282 to 286 (TRLAR) are RNA binding; important for wobble base 34 recognition. C315, C317, C320, and H346 together coordinate Zn(2+).

Belongs to the queuine tRNA-ribosyltransferase family. In terms of assembly, homodimer. Within each dimer, one monomer is responsible for RNA recognition and catalysis, while the other monomer binds to the replacement base PreQ1. It depends on Zn(2+) as a cofactor.

It carries out the reaction 7-aminomethyl-7-carbaguanine + guanosine(34) in tRNA = 7-aminomethyl-7-carbaguanosine(34) in tRNA + guanine. The protein operates within tRNA modification; tRNA-queuosine biosynthesis. Its function is as follows. Catalyzes the base-exchange of a guanine (G) residue with the queuine precursor 7-aminomethyl-7-deazaguanine (PreQ1) at position 34 (anticodon wobble position) in tRNAs with GU(N) anticodons (tRNA-Asp, -Asn, -His and -Tyr). Catalysis occurs through a double-displacement mechanism. The nucleophile active site attacks the C1' of nucleotide 34 to detach the guanine base from the RNA, forming a covalent enzyme-RNA intermediate. The proton acceptor active site deprotonates the incoming PreQ1, allowing a nucleophilic attack on the C1' of the ribose to form the product. After dissociation, two additional enzymatic reactions on the tRNA convert PreQ1 to queuine (Q), resulting in the hypermodified nucleoside queuosine (7-(((4,5-cis-dihydroxy-2-cyclopenten-1-yl)amino)methyl)-7-deazaguanosine). In Synechococcus elongatus (strain ATCC 33912 / PCC 7942 / FACHB-805) (Anacystis nidulans R2), this protein is Queuine tRNA-ribosyltransferase.